A 290-amino-acid polypeptide reads, in one-letter code: Arylamine N-acetyltransferase 2 (290 aa).

C68 (acyl-thioester intermediate) is an active-site residue. CoA contacts are provided by S103 and G104. 106–107 (IH) contributes to the substrate binding site. Active-site residues include H107 and D122. Residue Y208 participates in CoA binding.

It belongs to the arylamine N-acetyltransferase family.

Its subcellular location is the cytoplasm. The catalysed reaction is an arylamine + acetyl-CoA = an N-acetylarylamine + CoA. It catalyses the reaction an N-hydroxyarylamine + acetyl-CoA = an N-acetoxyarylamine + CoA. Functionally, catalyzes the N- or O-acetylation of various arylamine and heterocyclic amine substrates, and participates in the detoxification of a plethora of hydrazine and arylamine drugs. This Mus musculus (Mouse) protein is Arylamine N-acetyltransferase 2 (Nat2).